Reading from the N-terminus, the 81-residue chain is Cytotoxin 8 (81 aa).

The signal sequence occupies residues 1-21 (MKTLLLTLVVVTIVCLDLGYT). 4 disulfides stabilise this stretch: Cys24-Cys42, Cys35-Cys59, Cys63-Cys74, and Cys75-Cys80.

The protein belongs to the three-finger toxin family. Short-chain subfamily. Type IA cytotoxin sub-subfamily. Monomer in solution; Homodimer and oligomer in the presence of negatively charged lipids forming a pore with a size ranging between 20 and 30 Angstroms. In terms of tissue distribution, expressed by the venom gland.

It localises to the secreted. It is found in the target cell membrane. Functionally, shows cytolytic activity on many different cells by forming pore in lipid membranes. In vivo, increases heart rate or kills the animal by cardiac arrest. In addition, it binds to heparin with high affinity, interacts with Kv channel-interacting protein 1 (KCNIP1) in a calcium-independent manner, and binds to integrin alpha-V/beta-3 (ITGAV/ITGB3) with moderate affinity. This is Cytotoxin 8 from Naja atra (Chinese cobra).